The sequence spans 262 residues: Hemin import ATP-binding protein HmuV (262 aa).

The region spanning 3–244 is the ABC transporter domain; that stretch reads LQARNLTLAR…DHMRRVYGIE (242 aa). 35-42 provides a ligand contact to ATP; it reads GANGAGKS.

The protein belongs to the ABC transporter superfamily. Heme (hemin) importer (TC 3.A.1.14.5) family. The complex is composed of two ATP-binding proteins (HmuV), two transmembrane proteins (HmuU) and a solute-binding protein (HmuT).

Its subcellular location is the cell inner membrane. In terms of biological role, part of the ABC transporter complex HmuTUV involved in hemin import. Responsible for energy coupling to the transport system. The sequence is that of Hemin import ATP-binding protein HmuV from Bordetella bronchiseptica (strain ATCC BAA-588 / NCTC 13252 / RB50) (Alcaligenes bronchisepticus).